The primary structure comprises 161 residues: Nucleotide-binding protein Pnec_0318 (161 aa).

Belongs to the YajQ family.

Functionally, nucleotide-binding protein. The polypeptide is Nucleotide-binding protein Pnec_0318 (Polynucleobacter necessarius subsp. necessarius (strain STIR1)).